A 335-amino-acid chain; its full sequence is MTRTANEFLTPQAIKVEAVSGTSAKVILEPLERGFGHTLGNALRRILLSSLPGAAVVEVEIEGVEHEYSTLEGLQQDIVELLLNLKGLSIKLFDQNEAYLTLEKQGPGDITAADLRLPHNVEVVNPEHLIGTLSATGSLKMRLKVSQGRGYETSDSRFPEGETRPVGRLQLDASYSPIKRVSYTVENARVEQRTDLDKLVIDLETNGTVDPEEAIRKAATILQQQIAIFVDLQKDQTPVAQEPREEVDPILLRPVDDLELTVRSANCLKAENIYYIGDLVQRTEVELLKTPNLGKKSLTEIKDVLASKGLQLGMRLENWPPASLRMDDRFAYRSR.

The alpha N-terminal domain (alpha-NTD) stretch occupies residues 1-233 (MTRTANEFLT…QQIAIFVDLQ (233 aa)). The alpha C-terminal domain (alpha-CTD) stretch occupies residues 247 to 335 (VDPILLRPVD…MDDRFAYRSR (89 aa)).

The protein belongs to the RNA polymerase alpha chain family. Homodimer. The RNAP catalytic core consists of 2 alpha, 1 beta, 1 beta' and 1 omega subunit. When a sigma factor is associated with the core the holoenzyme is formed, which can initiate transcription.

It carries out the reaction RNA(n) + a ribonucleoside 5'-triphosphate = RNA(n+1) + diphosphate. In terms of biological role, DNA-dependent RNA polymerase catalyzes the transcription of DNA into RNA using the four ribonucleoside triphosphates as substrates. This chain is DNA-directed RNA polymerase subunit alpha, found in Acinetobacter baumannii (strain AB307-0294).